Reading from the N-terminus, the 446-residue chain is Glutamate--tRNA ligase 2 (446 aa).

The short motif at 8-18 (PSPTGYLHIGN) is the 'HIGH' region element. Positions 239 to 243 (GLSKR) match the 'KMSKS' region motif. Lys-242 is an ATP binding site.

It belongs to the class-I aminoacyl-tRNA synthetase family. Glutamate--tRNA ligase type 1 subfamily. As to quaternary structure, monomer.

Its subcellular location is the cytoplasm. It carries out the reaction tRNA(Glu) + L-glutamate + ATP = L-glutamyl-tRNA(Glu) + AMP + diphosphate. Functionally, catalyzes the attachment of glutamate to tRNA(Glu) in a two-step reaction: glutamate is first activated by ATP to form Glu-AMP and then transferred to the acceptor end of tRNA(Glu). This is Glutamate--tRNA ligase 2 from Methylobacterium radiotolerans (strain ATCC 27329 / DSM 1819 / JCM 2831 / NBRC 15690 / NCIMB 10815 / 0-1).